Here is a 416-residue protein sequence, read N- to C-terminus: PTS system N-acetylglucosamine-specific EIIC component (416 aa).

The PTS EIIC type-1 domain occupies 16–406 (SGLFQGLQKV…FNLKTPGREP (391 aa)). 10 helical membrane-spanning segments follow: residues 68–88 (AGGA…AIGF), 96–116 (TALA…AFPV), 130–150 (TYND…AVLW), 170–190 (LVPI…GLVW), 196–216 (GISN…ALFG), 266–286 (IFQA…ALAM), 298–318 (VLGM…TEPI), 323–343 (MFIA…SMAI), 344–364 (TWGL…DYAL), and 375–395 (IIPI…FAIV).

The protein resides in the cell membrane. Its function is as follows. The phosphoenolpyruvate-dependent sugar phosphotransferase system (sugar PTS), a major carbohydrate active transport system, catalyzes the phosphorylation of incoming sugar substrates concomitantly with their translocation across the cell membrane. This system is involved in N-acetylglucosamine (GlcNAc) transport. High-affinity permease, which exhibits a narrow specificity for GlcNAc. Essential for C-signaling between vegetative growth and development. The protein is PTS system N-acetylglucosamine-specific EIIC component of Streptomyces coelicolor (strain ATCC BAA-471 / A3(2) / M145).